The following is a 384-amino-acid chain: Putative 8-amino-7-oxononanoate synthase (384 aa).

R22 serves as a coordination point for substrate. A pyridoxal 5'-phosphate-binding site is contributed by 109–110 (GY). Residue H134 participates in substrate binding. Pyridoxal 5'-phosphate is bound by residues S182, 207 to 210 (DDAH), and 236 to 239 (TLSK). K239 carries the N6-(pyridoxal phosphate)lysine modification. T348 is a binding site for substrate.

This sequence belongs to the class-II pyridoxal-phosphate-dependent aminotransferase family. BioF subfamily. Homodimer. The cofactor is pyridoxal 5'-phosphate.

The enzyme catalyses 6-carboxyhexanoyl-[ACP] + L-alanine + H(+) = (8S)-8-amino-7-oxononanoate + holo-[ACP] + CO2. It participates in cofactor biosynthesis; biotin biosynthesis. Functionally, catalyzes the decarboxylative condensation of pimeloyl-[acyl-carrier protein] and L-alanine to produce 8-amino-7-oxononanoate (AON), [acyl-carrier protein], and carbon dioxide. The sequence is that of Putative 8-amino-7-oxononanoate synthase (bioF) from Caulobacter vibrioides (strain ATCC 19089 / CIP 103742 / CB 15) (Caulobacter crescentus).